The following is a 165-amino-acid chain: NADPH-dependent 7-cyano-7-deazaguanine reductase (165 aa).

Residue Cys56 is the Thioimide intermediate of the active site. Catalysis depends on Asp63, which acts as the Proton donor. Substrate contacts are provided by residues 78–80 (VES) and 97–98 (HE).

This sequence belongs to the GTP cyclohydrolase I family. QueF type 1 subfamily.

The protein localises to the cytoplasm. It carries out the reaction 7-aminomethyl-7-carbaguanine + 2 NADP(+) = 7-cyano-7-deazaguanine + 2 NADPH + 3 H(+). The protein operates within tRNA modification; tRNA-queuosine biosynthesis. Catalyzes the NADPH-dependent reduction of 7-cyano-7-deazaguanine (preQ0) to 7-aminomethyl-7-deazaguanine (preQ1). The protein is NADPH-dependent 7-cyano-7-deazaguanine reductase of Bacillus cereus (strain ATCC 14579 / DSM 31 / CCUG 7414 / JCM 2152 / NBRC 15305 / NCIMB 9373 / NCTC 2599 / NRRL B-3711).